The chain runs to 50 residues: Gene 38 protein (50 aa).

In Mycobacterium (Mycobacteriophage D29), this protein is Gene 38 protein (38).